The sequence spans 99 residues: Small ribosomal subunit protein bS20 (99 aa).

Basic residues predominate over residues Met1–Ala20. The tract at residues Met1–Ala29 is disordered.

It belongs to the bacterial ribosomal protein bS20 family.

In terms of biological role, binds directly to 16S ribosomal RNA. The polypeptide is Small ribosomal subunit protein bS20 (Paracidovorax citrulli (strain AAC00-1) (Acidovorax citrulli)).